Consider the following 221-residue polypeptide: Iron-sulfur cluster repair protein YtfE (221 aa).

The protein belongs to the RIC family. YtfE subfamily. Homodimer.

Its subcellular location is the cytoplasm. Functionally, di-iron-containing protein involved in the repair of iron-sulfur clusters damaged by oxidative and nitrosative stress conditions. The sequence is that of Iron-sulfur cluster repair protein YtfE from Cronobacter sakazakii (strain ATCC BAA-894) (Enterobacter sakazakii).